Consider the following 251-residue polypeptide: Chlorophyll a-b binding protein 4, chloroplastic (251 aa).

Ser35 carries the post-translational modification Phosphoserine. A chlorophyll b-binding site is contributed by Trp57. Residues Phe77 and Glu96 each contribute to the chlorophyll a site. Arg101 contributes to the chlorophyll b binding site. 2 helical membrane-spanning segments follow: residues 102-122 and 135-155; these read WAML…IGII and YFAS…YVEI. Positions 138, 144, 154, and 157 each coordinate chlorophyll b. Positions 204, 205, 208, 210, 222, and 237 each coordinate chlorophyll a.

It belongs to the light-harvesting chlorophyll a/b-binding (LHC) protein family. The LHC complex consists of chlorophyll a-b binding proteins. Red-emitting heterodimer with LHCA1. Binds at least 14 chlorophylls (8 Chl-a and 6 Chl-b) and carotenoids such as lutein and neoxanthin. is required as a cofactor. Photoregulated by reversible phosphorylation of its threonine residues.

It localises to the plastid. Its subcellular location is the chloroplast thylakoid membrane. The light-harvesting complex (LHC) functions as a light receptor, it captures and delivers excitation energy to photosystems with which it is closely associated. In Arabidopsis thaliana (Mouse-ear cress), this protein is Chlorophyll a-b binding protein 4, chloroplastic.